The following is a 246-amino-acid chain: uncharacterized protein (246 aa).

Disordered stretches follow at residues 29–54 (SLET…ENGS), 93–114 (LRRT…EDKF), and 148–246 (PIPP…SVVI). The span at 35-49 (PTSSSPSLSSNSDVS) shows a compositional bias: low complexity. Positions 172-183 (RQQTNNIRTLHV) are enriched in polar residues. Low complexity-rich tracts occupy residues 190–203 (SSSS…PSSS) and 214–225 (SKTTKNRSSNSS). The N-linked (GlcNAc...) asparagine glycan is linked to asparagine 219. A compositionally biased stretch (polar residues) spans 235–246 (LTPSPTFESVVI).

This is an uncharacterized protein from Caenorhabditis elegans.